Here is a 282-residue protein sequence, read N- to C-terminus: Ribosomal RNA small subunit methyltransferase I (282 aa).

Belongs to the methyltransferase superfamily. RsmI family.

The protein resides in the cytoplasm. The catalysed reaction is cytidine(1402) in 16S rRNA + S-adenosyl-L-methionine = 2'-O-methylcytidine(1402) in 16S rRNA + S-adenosyl-L-homocysteine + H(+). In terms of biological role, catalyzes the 2'-O-methylation of the ribose of cytidine 1402 (C1402) in 16S rRNA. This Buchnera aphidicola subsp. Acyrthosiphon pisum (strain APS) (Acyrthosiphon pisum symbiotic bacterium) protein is Ribosomal RNA small subunit methyltransferase I.